We begin with the raw amino-acid sequence, 1450 residues long: Phospholipase B1, membrane-associated (1450 aa).

The signal sequence occupies residues Met1 to Gly27. At Ser28–Tyr1422 the chain is on the extracellular side. N-linked (GlcNAc...) asparagine glycosylation is found at Asn32, Asn45, and Asn179. Repeat copies occupy residues Arg41–Ser351, Met366–Ser711, and Asn712–Ser1058. Positions Arg41 to Ser1407 are 4 X 308-326 AA approximate repeats. Residues Ser404, Asp518, and His659 contribute to the active site. A glycan (N-linked (GlcNAc...) asparagine) is linked at Asn699. The segment covering Thr708 to Ser720 has biased composition (polar residues). Residues Thr708–Val734 form a disordered region. N-linked (GlcNAc...) asparagine glycosylation is found at Asn787, Asn801, Asn844, Asn880, Asn926, Asn1059, Asn1226, Asn1280, Asn1383, and Asn1387. The stretch at Ile1068–Ser1407 is repeat 4. A necessary for membrane localization region spans residues Gln1408–Gln1450. A helical membrane pass occupies residues Trp1423–Trp1443. The Cytoplasmic segment spans residues Arg1444–Gln1450.

It belongs to the 'GDSL' lipolytic enzyme family. Phospholipase B1 subfamily. Undergoes proteolytic cleavage in the ileum. Expressed in the ileum mucosa, Paneth cells spermatocytes, spermatids and sperm (at protein level). Expressed in the ileum, jejunum, esophagus and testis.

The protein resides in the apical cell membrane. It carries out the reaction a 1,2-diacyl-sn-glycero-3-phosphocholine + H2O = a 1-acyl-sn-glycero-3-phosphocholine + a fatty acid + H(+). The catalysed reaction is a 1-O-alkyl-2-acyl-sn-glycero-3-phosphocholine + H2O = a 1-O-alkyl-sn-glycero-3-phosphocholine + a fatty acid + H(+). The enzyme catalyses a 1-acyl-sn-glycero-3-phosphocholine + H2O = sn-glycerol 3-phosphocholine + a fatty acid + H(+). It catalyses the reaction a triacylglycerol + H2O = a diacylglycerol + a fatty acid + H(+). It carries out the reaction 1,2-dihexadecanoyl-sn-glycero-3-phosphocholine + H2O = 1-hexadecanoyl-sn-glycero-3-phosphocholine + hexadecanoate + H(+). The catalysed reaction is 1-hexadecanoyl-2-(9Z-octadecenoyl)-sn-glycero-3-phosphocholine + H2O = 1-hexadecanoyl-sn-glycero-3-phosphocholine + (9Z)-octadecenoate + H(+). The enzyme catalyses 1,2-di-(9Z-octadecenoyl)-sn-glycero-3-phosphocholine + H2O = 1-(9Z-octadecenoyl)-sn-glycero-3-phosphocholine + (9Z)-octadecenoate + H(+). It catalyses the reaction 1-hexadecanoyl-2-(9Z,12Z-octadecadienoyl)-sn-glycero-3-phosphocholine + H2O = (9Z,12Z)-octadecadienoate + 1-hexadecanoyl-sn-glycero-3-phosphocholine + H(+). It carries out the reaction 1-hexadecanoyl-2-(9Z,12Z-octadecadienoyl)-sn-glycero-3-phosphocholine + H2O = 2-(9Z,12Z-octadecadienoyl)-sn-glycero-3-phosphocholine + hexadecanoate + H(+). The catalysed reaction is 1-hexadecanoyl-2-(9Z-octadecenoyl)-sn-glycero-3-phosphoethanolamine + H2O = 1-hexadecanoyl-sn-glycero-3-phosphoethanolamine + (9Z)-octadecenoate + H(+). The enzyme catalyses 1-hexadecanoyl-2-(9Z-octadecenoyl)-sn-glycero-3-phospho-(1'-sn-glycerol) + H2O = 1-hexadecanoyl-sn-glycero-3-phospho-(1'-sn-glycerol) + (9Z)-octadecenoate + H(+). It catalyses the reaction 1,2-dihexadecanoyl-sn-glycero-3-phosphocholine + 2 H2O = sn-glycerol 3-phosphocholine + 2 hexadecanoate + 2 H(+). It carries out the reaction 1-O-hexadecyl-2-(9Z)-octadecenoyl-sn-glycero-3-phosphocholine + H2O = 1-O-hexadecyl-sn-glycero-3-phosphocholine + (9Z)-octadecenoate + H(+). The catalysed reaction is 1-hexadecanoyl-sn-glycero-3-phosphocholine + H2O = sn-glycerol 3-phosphocholine + hexadecanoate + H(+). The enzyme catalyses 1,2,3-tri-(9Z-octadecenoyl)-glycerol + H2O = di-(9Z)-octadecenoylglycerol + (9Z)-octadecenoate + H(+). It catalyses the reaction 1-hexadecanoyl-2-(9Z)-octadecenoyl-3-octadecanoyl-sn-glycerol + H2O = 1-hexadecanoyl-2-(9Z-octadecenoyl)-sn-glycerol + octadecanoate + H(+). It carries out the reaction 1,3-dihexadecanoyl-2-(9Z-octadecenoyl)glycerol + H2O = 1,3-dihexadecanoylglycerol + (9Z)-octadecenoate + H(+). The catalysed reaction is 1,3-dihexadecanoyl-2-(9Z-octadecenoyl)glycerol + H2O = 1-hexadecanoyl-2-(9Z-octadecenoyl)-glycerol + hexadecanoate + H(+). The enzyme catalyses 1-hexadecanoyl-2-(9Z)-octadecenoyl-3-octadecanoyl-sn-glycerol + H2O = 1-hexadecanoyl-3-octadecanoyl-sn-glycerol + (9Z)-octadecenoate + H(+). It catalyses the reaction 1-hexadecanoyl-2-(9Z)-octadecenoyl-3-octadecanoyl-sn-glycerol + H2O = 2-(9Z-octadecenoyl)-3-octadecanoyl-sn-glycerol + hexadecanoate + H(+). It carries out the reaction 1-octadecanoyl-2-(9Z,12Z)-octadecadienoyl-sn-glycerol + H2O = 1-octadecanoyl-sn-glycerol + (9Z,12Z)-octadecadienoate + H(+). The catalysed reaction is 1,2-di-(9Z-octadecenoyl)-sn-glycerol + H2O = 1-(9Z-octadecenoyl)-sn-glycerol + (9Z)-octadecenoate + H(+). The enzyme catalyses 2,3-di-(9Z)-octadecenoyl-sn-glycerol + H2O = 3-(9Z-octadecenoyl)-sn-glycerol + (9Z)-octadecenoate + H(+). It catalyses the reaction 1,3-di-(9Z-octadecenoyl)-glycerol + H2O = 1-(9Z-octadecenoyl)-glycerol + (9Z)-octadecenoate + H(+). It carries out the reaction 1-(9Z-octadecenoyl)-glycerol + H2O = glycerol + (9Z)-octadecenoate + H(+). The catalysed reaction is 2-(9Z-octadecenoyl)-glycerol + H2O = glycerol + (9Z)-octadecenoate + H(+). Up-regulated by bile acids such as deoxycholate. Inhibited by diisopropyl fluorophosphate. Its function is as follows. Calcium-independent membrane-associated phospholipase that catalyzes complete diacylation of phospholipids by hydrolyzing both sn-1 and sn-2 fatty acyl chains attached to the glycerol backbone (phospholipase B activity). Has dual phospholipase and lysophospholipase activities toward diacylphospholipids. Preferentially cleaves sn-2 ester bonds over sn-1 bonds. Acts as a lipase toward glycerolipid substrates. Hydrolyzes fatty acyl chains of diacylglycerols with preference for the sn-2 position and of triacylglycerols with not positional selectivity. May also hydrolyze long chain retinyl esters such as retinyl palmitate. May contribute to digestion of dietary phospholipids, glycerolipids and retinoids, facilitating lipid absorption at the brush border. In Rattus norvegicus (Rat), this protein is Phospholipase B1, membrane-associated (Plb1).